Here is a 215-residue protein sequence, read N- to C-terminus: KID-containing protein 1 (215 aa).

2 disordered regions span residues Met1–Arg132 and Asn150–Leu183. Over residues Asp64 to Leu81 the composition is skewed to acidic residues. The Nuclear localization signal signature appears at Asn129 to Tyr137. Over residues Asp162–Asp175 the composition is skewed to acidic residues. Positions Glu177–Asp204 are kinase-inducible domain (KID). Ser188 carries the post-translational modification Phosphoserine; by PKA.

As to quaternary structure, interacts with HDA19; Ser-188 is critical for this interaction. Strongly expressed in stems, flowers, roots and immature siliques, but not detected in leaf blades of seedlings.

Its subcellular location is the nucleus. In terms of biological role, transcription activator which may regulates gene expression through interaction with the histone deacetylase HDA19. This Brassica napus (Rape) protein is KID-containing protein 1.